Reading from the N-terminus, the 270-residue chain is Gap junction beta-3 protein (270 aa).

Residues 1-20 lie on the Cytoplasmic side of the membrane; it reads MDWKKLQDLLSGVNQYSTAF. The helical transmembrane segment at 21 to 40 threads the bilayer; that stretch reads GRIWLSVVFVFRVLVYVVAA. The Extracellular portion of the chain corresponds to 41–75; that stretch reads ERVWGDEQKDFDCNTRQPGCTNVCYDNFFPISNIR. The helical transmembrane segment at 76 to 98 threads the bilayer; that stretch reads LWALQLIFVTCPSMLVILHVAYR. Over 99–126 the chain is Cytoplasmic; that stretch reads EERERKHRQKHGEQCAKLYSHPGKKHGG. Residues 127 to 149 traverse the membrane as a helical segment; sequence LWWTYLFSLIFKLIIELVFLYVL. The Extracellular portion of the chain corresponds to 150 to 188; sequence HTLWHGFTMPRLVQCASIVPCPNTVDCYIARPTEKKVFT. The chain crosses the membrane as a helical span at residues 189-211; that stretch reads YFMVGASAVCIILTICEICYLIF. Residues 212-270 are Cytoplasmic-facing; it reads HRIMRGISKGKSTKSISSPKSSSRASTCRCHHKLLESGDPEADPASEKLQASAPSLTPI. Residues 246-270 are disordered; that stretch reads LESGDPEADPASEKLQASAPSLTPI.

The protein belongs to the connexin family. Beta-type (group I) subfamily. A connexon is composed of a hexamer of connexins. Interacts with CNST.

It is found in the cell membrane. The protein localises to the cell junction. It localises to the gap junction. In terms of biological role, one gap junction consists of a cluster of closely packed pairs of transmembrane channels, the connexons, through which materials of low MW diffuse from one cell to a neighboring cell. The protein is Gap junction beta-3 protein (Gjb3) of Mus musculus (Mouse).